The primary structure comprises 251 residues: MAGHSKWATTKHKKAANDAKRGKEFAKLIKNIEVAARTGGGDPAANPTLDDMIKKAKKASVPNDNIERARKRGSGEEAGGADWETVMYEGYGPNGVAMLIECLTDNRNRAATDVRTAMTKNGGNLGESGSVAYMFSRTGLVMVEKGELSEDDILIAVLEAGAEEVNDNGEKFEITCAPGDVPAVREALVAADIEVDDTDTDFRASVEVPLQADDARKIFRLIDALEDSDDVQNVYTNMDLSEEVLAELGED.

Positions 1-21 (MAGHSKWATTKHKKAANDAKR) are disordered.

The protein belongs to the TACO1 family.

The protein localises to the cytoplasm. The protein is Probable transcriptional regulatory protein cauri_1421 of Corynebacterium aurimucosum (strain ATCC 700975 / DSM 44827 / CIP 107346 / CN-1) (Corynebacterium nigricans).